The following is a 121-amino-acid chain: Large ribosomal subunit protein eL31 (121 aa).

Belongs to the eukaryotic ribosomal protein eL31 family.

In Perilla frutescens (Beefsteak mint), this protein is Large ribosomal subunit protein eL31 (RPL31).